Reading from the N-terminus, the 655-residue chain is Phosphatidylinositol-3,5-bisphosphate 3-phosphatase MTMR6 (655 aa).

Positions 1–101 constitute a GRAM domain; that stretch reads MEHIRTTKVE…YNSLLQLSKQ (101 aa). The interval 2-141 is interaction with RAB1B; it reads EHIRTTKVEQ…AEYERMGVPN (140 aa). Position 108 is a phosphotyrosine (tyrosine 108). The 414-residue stretch at 124–537 folds into the Myotubularin phosphatase domain; the sequence is GWQLIDLAAE…FNFKFWRNMY (414 aa). Residues asparagine 286, asparagine 311, and isoleucine 312 each contribute to the a 1,2-diacyl-sn-glycero-3-phospho-(1D-myo-inositol-3,5-bisphosphate) site. Asparagine 286, asparagine 311, and isoleucine 312 together coordinate a 1,2-diacyl-sn-glycero-3-phospho-(1D-myo-inositol-3-phosphate). Cysteine 374 acts as the Phosphocysteine intermediate in catalysis. Positions 375, 376, 377, 378, 379, 380, 416, and 420 each coordinate a 1,2-diacyl-sn-glycero-3-phospho-(1D-myo-inositol-3,5-bisphosphate). The a 1,2-diacyl-sn-glycero-3-phospho-(1D-myo-inositol-3-phosphate) site is built by serine 375, aspartate 376, glycine 377, tryptophan 378, aspartate 379, and arginine 380. Arginine 420 provides a ligand contact to a 1,2-diacyl-sn-glycero-3-phospho-(1D-myo-inositol-3-phosphate). The stretch at 547–581 forms a coiled coil; sequence RQSVLNIIMNMNEQNKQLEEDVKDLEAKIKQCKSG. Phosphoserine occurs at positions 595, 623, and 645.

The protein belongs to the protein-tyrosine phosphatase family. Non-receptor class myotubularin subfamily. In terms of assembly, homodimer. Heterodimer (via C-terminus) with MTMR9 (via C-terminus). Interacts with ALKBH4. Interacts with KCNN4. Interacts (via GRAM domain) with RAB1B (in GDP-bound form); the interaction regulates MTMR6 recruitment to the endoplasmic reticulum-Golgi intermediate compartment.

It localises to the cytoplasm. Its subcellular location is the endoplasmic reticulum. The protein localises to the cell projection. The protein resides in the ruffle membrane. It is found in the endoplasmic reticulum-Golgi intermediate compartment. It localises to the perinuclear region. The enzyme catalyses a 1,2-diacyl-sn-glycero-3-phospho-(1D-myo-inositol-3,5-bisphosphate) + H2O = a 1,2-diacyl-sn-glycero-3-phospho-(1D-myo-inositol-5-phosphate) + phosphate. The catalysed reaction is a 1,2-diacyl-sn-glycero-3-phospho-(1D-myo-inositol-3-phosphate) + H2O = a 1,2-diacyl-sn-glycero-3-phospho-(1D-myo-inositol) + phosphate. It catalyses the reaction 1,2-dioctanoyl-sn-glycero-3-phospho-(1D-myo-inositol-3,5-bisphosphate) + H2O = 1,2-dioctanoyl-sn-glycero-3-phospho-(1D-myo-inositol-5-phosphate) + phosphate. It carries out the reaction 1,2-dioctanoyl-sn-glycero-3-phospho-(1-D-myo-inositol-3-phosphate) + H2O = 1,2-dioctanoyl-sn-glycero-3-phospho-(1D-myo-inositol) + phosphate. Its activity is regulated as follows. Allosterically activated by phosphatidylserine and/or phosphatidylinositol 4-phosphate (PtdIns(4)P), and phosphatidylinositol 5-phosphate (PtdIns(5)P). Interaction with MTMR9 increases catalytic activity towards phosphatidylinositol 3,5-bisphosphate. Functionally, lipid phosphatase that specifically dephosphorylates the D-3 position of phosphatidylinositol 3-phosphate and phosphatidylinositol 3,5-bisphosphate, generating phosphatidylinositol and phosphatidylinositol 5-phosphate. Binds with high affinity to phosphatidylinositol 3,5-bisphosphate (PtdIns(3,5)P2) but also to phosphatidylinositol 3-phosphate (PtdIns(3)P), phosphatidylinositol 4-phosphate (PtdIns(4)P), and phosphatidylinositol 5-phosphate (PtdIns(5)P), phosphatidic acid and phosphatidylserine. Negatively regulates ER-Golgi protein transport. Probably in association with MTMR9, plays a role in the late stages of macropinocytosis by dephosphorylating phosphatidylinositol 3-phosphate in membrane ruffles. Acts as a negative regulator of KCNN4/KCa3.1 channel activity in CD4(+) T-cells possibly by decreasing intracellular levels of phosphatidylinositol 3-phosphate. Negatively regulates proliferation of reactivated CD4(+) T-cells. In complex with MTMR9, negatively regulates DNA damage-induced apoptosis. The formation of the MTMR6-MTMR9 complex stabilizes both MTMR6 and MTMR9 protein levels. This is Phosphatidylinositol-3,5-bisphosphate 3-phosphatase MTMR6 from Rattus norvegicus (Rat).